The chain runs to 204 residues: ADP-ribosylation factor-like protein 15 (204 aa).

Residues 39–46 (GLTGSGKT), 82–86 (ELGGA), and 142–145 (NHQD) contribute to the GTP site.

The protein belongs to the small GTPase superfamily. Arf family.

In Mus musculus (Mouse), this protein is ADP-ribosylation factor-like protein 15 (Arl15).